The chain runs to 207 residues: Guanylate kinase (207 aa).

In terms of domain architecture, Guanylate kinase-like spans 4 to 184 (GTLYIVSAPS…ALTDLKTIIR (181 aa)). An ATP-binding site is contributed by 11 to 18 (APSGAGKS).

This sequence belongs to the guanylate kinase family.

The protein localises to the cytoplasm. The catalysed reaction is GMP + ATP = GDP + ADP. In terms of biological role, essential for recycling GMP and indirectly, cGMP. The sequence is that of Guanylate kinase from Escherichia coli O6:K15:H31 (strain 536 / UPEC).